A 235-amino-acid polypeptide reads, in one-letter code: Large ribosomal subunit protein uL1 (235 aa).

This sequence belongs to the universal ribosomal protein uL1 family. Part of the 50S ribosomal subunit.

Binds directly to 23S rRNA. The L1 stalk is quite mobile in the ribosome, and is involved in E site tRNA release. In terms of biological role, protein L1 is also a translational repressor protein, it controls the translation of the L11 operon by binding to its mRNA. The chain is Large ribosomal subunit protein uL1 from Mycolicibacterium vanbaalenii (strain DSM 7251 / JCM 13017 / BCRC 16820 / KCTC 9966 / NRRL B-24157 / PYR-1) (Mycobacterium vanbaalenii).